A 202-amino-acid chain; its full sequence is MGIIEEKALFVTCGATVPFPKLVSCVLSDEFCQELIQYGFVRLIIQFGRNYSSEFEHLVQERGGQRESQKIPIDQFGCGDTARQYVLMNGKLKVIGFDFSTKMQSIIRDYSDLVISHAGTGSILDSLRLNKPLIVCVNDSLMDNHQQQIADKFVELGYVWSCAPTETGLIAGLRASQTEKLKPFPVSHNPSFERLLVETIYS.

This sequence belongs to the glycosyltransferase 28 family. In terms of assembly, heterodimer with ALG14 to form a functional enzyme.

Its subcellular location is the endoplasmic reticulum. The catalysed reaction is an N-acetyl-alpha-D-glucosaminyl-diphospho-di-trans,poly-cis-dolichol + UDP-N-acetyl-alpha-D-glucosamine = an N,N'-diacetylchitobiosyl-diphospho-di-trans,poly-cis-dolichol + UDP + H(+). Functionally, involved in protein N-glycosylation. Essential for the second step of the dolichol-linked oligosaccharide pathway. In Saccharomyces cerevisiae (strain ATCC 204508 / S288c) (Baker's yeast), this protein is UDP-N-acetylglucosamine transferase subunit ALG13 (ALG13).